Reading from the N-terminus, the 767-residue chain is Cilia- and flagella-associated protein 91 (767 aa).

The tract at residues 1-29 (MSHAVTIEEPQAQPQVSQTRYRERSRAGS) is disordered.

It belongs to the CFAP91 family. As to quaternary structure, interacts with MYCBP and AKAP1. Part of a complex containing MYCBP, AKAP1 and PRKAR2B. Interacts with CFAP61. In terms of assembly, does not interact with MYCBP. In terms of processing, phosphorylated by PKA. In terms of tissue distribution, strongly expressed in the liver. As to expression, widely expressed, but strongly expressed in all spermatogenesis-related tissues, including the testis, the epithelium of cauda and the corpus epididymis, as well as the spermatid and mature sperm. Also expressed in Leydig cells.

It is found in the mitochondrion. The protein localises to the cytoplasm. It localises to the cytoskeleton. The protein resides in the cilium axoneme. Functionally, involved in sperm flagellum axonemal organization and function. May regulate cilium motility through its role in the assembly of the axonemal radial spokes. This is Cilia- and flagella-associated protein 91 from Homo sapiens (Human).